Here is a 715-residue protein sequence, read N- to C-terminus: Zinc finger protein 544 (715 aa).

The region spanning valine 14–alanine 85 is the KRAB domain. Glycyl lysine isopeptide (Lys-Gly) (interchain with G-Cter in SUMO2) cross-links involve residues lysine 273 and lysine 289. The C2H2-type 1; atypical zinc-finger motif lies at serine 354 to histidine 374. C2H2-type zinc fingers lie at residues phenylalanine 380–histidine 402, tyrosine 408–histidine 430, tyrosine 436–histidine 458, tyrosine 464–histidine 486, phenylalanine 492–histidine 514, tyrosine 520–histidine 542, tyrosine 548–histidine 570, tyrosine 576–histidine 598, tyrosine 604–histidine 626, tyrosine 632–histidine 654, phenylalanine 660–histidine 682, and tyrosine 688–histidine 710. Lysine 534 participates in a covalent cross-link: Glycyl lysine isopeptide (Lys-Gly) (interchain with G-Cter in SUMO2).

The protein belongs to the krueppel C2H2-type zinc-finger protein family.

Its subcellular location is the nucleus. Its function is as follows. May be involved in transcriptional regulation. In Homo sapiens (Human), this protein is Zinc finger protein 544 (ZNF544).